We begin with the raw amino-acid sequence, 4582 residues long: Probable transcription-associated protein 1 (4582 aa).

A compositionally biased stretch (pro residues) spans 1 to 11 (MSTNPPQPPPS). 10 disordered regions span residues 1–52 (MSTN…SSGN), 219–276 (TTTA…TTTT), 556–581 (KEKE…ANTT), 794–821 (VGGS…TNSN), 1152–1195 (ENEN…NNNI), 1483–1570 (QSTT…STIN), 2341–2410 (SIKT…NIDD), 2537–2567 (TTTT…QVTK), 2637–2662 (SDGG…GGAS), and 2741–2789 (SPST…TTTE). Positions 25–37 (PMSTTNPSQPTIT) are enriched in polar residues. Composition is skewed to low complexity over residues 38-50 (SSSA…SSSS), 219-250 (TTTA…NTIT), and 258-276 (PSTT…TTTT). The span at 556 to 573 (KEKEKELKDPQSLKDKLD) shows a compositional bias: basic and acidic residues. Residues 794-811 (VGGSGGSNSSGGGGGGGS) are compositionally biased toward gly residues. 5 stretches are compositionally biased toward low complexity: residues 812 to 821 (NSSNNSTNSN), 1158 to 1194 (DNNN…NNNN), 1484 to 1504 (STTT…ETAT), 1515 to 1568 (TEPT…SSST), and 2341 to 2367 (SIKT…DSSS). The span at 2378 to 2398 (SITTPSQGGVATPNVSDSTPT) shows a compositional bias: polar residues. 2 stretches are compositionally biased toward low complexity: residues 2537–2556 (TTTT…DSSS) and 2650–2662 (SSSG…GGAS). The stretch at 2944–2991 (NDINQQQQQQQQQQQQQQQQQQQQQQQQQQQQQQQQQQQQQQHHQQEQ) forms a coiled coil. In terms of domain architecture, FAT spans 3185–3815 (VISFLGENYN…YYHFRKLVLE (631 aa)). Low complexity-rich tracts occupy residues 3491–3509 (TNTT…TTTT) and 3824–3916 (TTSP…ANTT). Disordered stretches follow at residues 3491–3517 (TNTT…PQQP) and 3821–3928 (SKFT…FSPL). Positions 4171–4541 (VCPRITLYGG…MLENRIDSLT (371 aa)) constitute a PI3K/PI4K catalytic domain. The G-loop stretch occupies residues 4177 to 4183 (LYGGNGK). A disordered region spans residues 4312–4337 (NITEDNNISSSSSSSSSSGSNSGENS). Low complexity predominate over residues 4320–4337 (SSSSSSSSSSGSNSGENS). The tract at residues 4400–4408 (DIGDIDPSK) is catalytic loop. Residues 4429–4451 (NRKLGFDLLQDNPYNQQQLLRLS) are activation loop. In terms of domain architecture, FATC spans 4538–4582 (DSLTPSSQPDKTCFISPIVKKVNQLIQNSLSSNISQLDQLSCPWL).

Belongs to the PI3/PI4-kinase family. TRA1 subfamily.

The polypeptide is Probable transcription-associated protein 1 (tra1) (Dictyostelium discoideum (Social amoeba)).